A 53-amino-acid chain; its full sequence is Sec-independent protein translocase protein TatA (53 aa).

The chain crosses the membrane as a helical span at residues 1–21; it reads MGMSLSHLLIVLLIIFVLFGA.

Belongs to the TatA/E family. The Tat system comprises two distinct complexes: a TatABC complex, containing multiple copies of TatA, TatB and TatC subunits, and a separate TatA complex, containing only TatA subunits. Substrates initially bind to the TatABC complex, which probably triggers association of the separate TatA complex to form the active translocon.

The protein resides in the cell inner membrane. Part of the twin-arginine translocation (Tat) system that transports large folded proteins containing a characteristic twin-arginine motif in their signal peptide across membranes. TatA could form the protein-conducting channel of the Tat system. In Rickettsia conorii (strain ATCC VR-613 / Malish 7), this protein is Sec-independent protein translocase protein TatA.